The following is a 336-amino-acid chain: tRNA N6-adenosine threonylcarbamoyltransferase (336 aa).

His114 and His118 together coordinate Fe cation. Substrate-binding positions include 136–140 (LVSGG), Asp169, Gly182, Asp186, and Asn275. Asp302 is a Fe cation binding site.

The protein belongs to the KAE1 / TsaD family. It depends on Fe(2+) as a cofactor.

The protein resides in the cytoplasm. The enzyme catalyses L-threonylcarbamoyladenylate + adenosine(37) in tRNA = N(6)-L-threonylcarbamoyladenosine(37) in tRNA + AMP + H(+). In terms of biological role, required for the formation of a threonylcarbamoyl group on adenosine at position 37 (t(6)A37) in tRNAs that read codons beginning with adenine. Is involved in the transfer of the threonylcarbamoyl moiety of threonylcarbamoyl-AMP (TC-AMP) to the N6 group of A37, together with TsaE and TsaB. TsaD likely plays a direct catalytic role in this reaction. This Streptococcus agalactiae serotype Ia (strain ATCC 27591 / A909 / CDC SS700) protein is tRNA N6-adenosine threonylcarbamoyltransferase.